A 403-amino-acid chain; its full sequence is Histidine--tRNA ligase (403 aa).

The protein belongs to the class-II aminoacyl-tRNA synthetase family. In terms of assembly, homodimer.

The protein resides in the cytoplasm. It catalyses the reaction tRNA(His) + L-histidine + ATP = L-histidyl-tRNA(His) + AMP + diphosphate + H(+). The chain is Histidine--tRNA ligase from Sulfurovum sp. (strain NBC37-1).